Here is a 152-residue protein sequence, read N- to C-terminus: RxLR effector protein Avrblb1 (152 aa).

Positions 1 to 24 are cleaved as a signal peptide; the sequence is MRSLLLTVLLNLVVLLATTGAVSS. Residues 51 to 72 carry the RxLR-dEER motif; it reads RSLRGDYNNEVTKEPNTSDEER. The RGD RLK-binding motif motif lies at 54–56; it reads RGD. Asparagine 66 carries an N-linked (GlcNAc...) asparagine glycan. Positions 99 to 152 are w motif; sequence QSKTVLRYEDKLFTALYKSGETPRSLRTKHLDKASASVFFNRFKKWYDKNVGPS.

This sequence belongs to the RxLR effector family. Interacts with host defense protein RGA2/Rpi-blb1. Interacts with host legume-type lectin receptor kinase LECRK19.

It localises to the secreted. The protein resides in the host nucleus. It is found in the host nucleolus. Its subcellular location is the host cell membrane. Functionally, secreted effector that acts as an elicitor of hypersensitive response (HR) specifically on plants carrying defense protein RGA2/Rpi-blb1. Enhances P.infestans colonization of plant hosts Nicotiana benthamiana and potato Solanum bulbocastanum leaves. Associates with host legume-type lectin receptor kinases and disrupts attachments between the host plasma membrane and cell wall. The protein is RxLR effector protein Avrblb1 of Phytophthora infestans (strain T30-4) (Potato late blight agent).